The chain runs to 337 residues: Dihydroorotate dehydrogenase (quinone) (337 aa).

FMN-binding positions include 58 to 62 (AGLDK) and threonine 82. Lysine 62 contacts substrate. Substrate is bound at residue 107-111 (NCMGF). FMN-binding residues include asparagine 137 and asparagine 170. Asparagine 170 contributes to the substrate binding site. The Nucleophile role is filled by serine 173. Residue asparagine 175 coordinates substrate. Residues lysine 215 and threonine 243 each contribute to the FMN site. Substrate is bound at residue 244–245 (NT). FMN-binding positions include glycine 266, glycine 294, and 315–316 (YS).

It belongs to the dihydroorotate dehydrogenase family. Type 2 subfamily. In terms of assembly, monomer. FMN serves as cofactor.

Its subcellular location is the cell membrane. The catalysed reaction is (S)-dihydroorotate + a quinone = orotate + a quinol. It participates in pyrimidine metabolism; UMP biosynthesis via de novo pathway; orotate from (S)-dihydroorotate (quinone route): step 1/1. Catalyzes the conversion of dihydroorotate to orotate with quinone as electron acceptor. In Dichelobacter nodosus (strain VCS1703A), this protein is Dihydroorotate dehydrogenase (quinone).